The chain runs to 105 residues: MANNVMDSSFKKEVLESDLPVLVDFWAEWCGPCKMLTPIIDEISKELQGKVKVLKMNIDENPNTPSEYGIRSIPTIMLFKNGEQKDTKIGLQQKNSLLDWINKSI.

Positions M1 to I105 constitute a Thioredoxin domain. C30 and C33 are disulfide-bonded.

Belongs to the thioredoxin family.

In terms of biological role, component of the thioredoxin-thioredoxin reductase system. Participates in various redox reactions through the reversible oxidation of its active center dithiol to a disulfide and catalyzes dithiol-disulfide exchange reactions. This chain is Thioredoxin (trxA), found in Rickettsia conorii (strain ATCC VR-613 / Malish 7).